Here is a 214-residue protein sequence, read N- to C-terminus: RNA pyrophosphohydrolase (214 aa).

A Nudix hydrolase domain is found at 6-149 (GFRPNVGIIL…KRDVYQLALT (144 aa)). Residues 38–59 (GGIKYGETPMQAMYRELHEETG) carry the Nudix box motif.

The protein belongs to the Nudix hydrolase family. RppH subfamily. The cofactor is a divalent metal cation.

Accelerates the degradation of transcripts by removing pyrophosphate from the 5'-end of triphosphorylated RNA, leading to a more labile monophosphorylated state that can stimulate subsequent ribonuclease cleavage. This chain is RNA pyrophosphohydrolase, found in Burkholderia orbicola (strain MC0-3).